The following is a 32-amino-acid chain: Protamine S4 (32 aa).

Residues Gly1–Cys32 form a disordered region.

Testis.

It is found in the nucleus. The protein resides in the chromosome. Protamines substitute for histones in the chromatin of sperm during the haploid phase of spermatogenesis. They compact sperm DNA into a highly condensed, stable and inactive complex. The protein is Protamine S4 of Scyliorhinus canicula (Small-spotted catshark).